Consider the following 68-residue polypeptide: MIFPIRCFSCGNVISEVYEEYRTRLKNGENPEEILNDLEIKKYCCRRMFASHRLDNDRELFDDIVEYK.

Zn(2+) contacts are provided by Cys7, Cys10, Cys44, and Cys45.

The protein belongs to the archaeal Rpo10/eukaryotic RPB10 RNA polymerase subunit family. In terms of assembly, part of the RNA polymerase complex. Zn(2+) serves as cofactor.

It is found in the cytoplasm. The enzyme catalyses RNA(n) + a ribonucleoside 5'-triphosphate = RNA(n+1) + diphosphate. Its function is as follows. DNA-dependent RNA polymerase (RNAP) catalyzes the transcription of DNA into RNA using the four ribonucleoside triphosphates as substrates. This chain is DNA-directed RNA polymerase subunit Rpo10, found in Methanococcus maripaludis (strain DSM 14266 / JCM 13030 / NBRC 101832 / S2 / LL).